The sequence spans 689 residues: Glycine--tRNA ligase beta subunit (689 aa).

It belongs to the class-II aminoacyl-tRNA synthetase family. In terms of assembly, tetramer of two alpha and two beta subunits.

Its subcellular location is the cytoplasm. It catalyses the reaction tRNA(Gly) + glycine + ATP = glycyl-tRNA(Gly) + AMP + diphosphate. This Shewanella baltica (strain OS185) protein is Glycine--tRNA ligase beta subunit.